Consider the following 185-residue polypeptide: Ribosome-recycling factor (185 aa).

The disordered stretch occupies residues 143 to 163 (EKEKLISEDDNKKGMDDIQKE).

The protein belongs to the RRF family.

It localises to the cytoplasm. In terms of biological role, responsible for the release of ribosomes from messenger RNA at the termination of protein biosynthesis. May increase the efficiency of translation by recycling ribosomes from one round of translation to another. The chain is Ribosome-recycling factor from Syntrophomonas wolfei subsp. wolfei (strain DSM 2245B / Goettingen).